Consider the following 101-residue polypeptide: uncharacterized protein (101 aa).

This is an uncharacterized protein from Acanthamoeba polyphaga mimivirus (APMV).